Consider the following 370-residue polypeptide: Uroporphyrinogen decarboxylase (370 aa).

Substrate contacts are provided by residues 29–33 (RQAGR), Asp79, Tyr155, Ser210, and His342.

It belongs to the uroporphyrinogen decarboxylase family. As to quaternary structure, homodimer.

It localises to the cytoplasm. The catalysed reaction is uroporphyrinogen III + 4 H(+) = coproporphyrinogen III + 4 CO2. It participates in porphyrin-containing compound metabolism; protoporphyrin-IX biosynthesis; coproporphyrinogen-III from 5-aminolevulinate: step 4/4. In terms of biological role, catalyzes the decarboxylation of four acetate groups of uroporphyrinogen-III to yield coproporphyrinogen-III. This chain is Uroporphyrinogen decarboxylase, found in Delftia acidovorans (strain DSM 14801 / SPH-1).